Here is a 276-residue protein sequence, read N- to C-terminus: Phosphonoacetaldehyde hydrolase (276 aa).

Aspartate 19 functions as the Nucleophile in the catalytic mechanism. Mg(2+) is bound by residues aspartate 19 and alanine 21. The Schiff-base intermediate with substrate role is filled by lysine 60. Aspartate 193 contributes to the Mg(2+) binding site.

The protein belongs to the HAD-like hydrolase superfamily. PhnX family. As to quaternary structure, homodimer. The cofactor is Mg(2+).

The catalysed reaction is phosphonoacetaldehyde + H2O = acetaldehyde + phosphate + H(+). Its function is as follows. Involved in phosphonate degradation. The chain is Phosphonoacetaldehyde hydrolase from Bordetella bronchiseptica (strain ATCC BAA-588 / NCTC 13252 / RB50) (Alcaligenes bronchisepticus).